The following is a 339-amino-acid chain: Ferrochelatase (339 aa).

His-202 and Glu-283 together coordinate Fe cation.

The protein belongs to the ferrochelatase family.

The protein localises to the cytoplasm. The enzyme catalyses heme b + 2 H(+) = protoporphyrin IX + Fe(2+). Its pathway is porphyrin-containing compound metabolism; protoheme biosynthesis; protoheme from protoporphyrin-IX: step 1/1. Catalyzes the ferrous insertion into protoporphyrin IX. The protein is Ferrochelatase of Psychrobacter sp. (strain PRwf-1).